The sequence spans 65 residues: Sec-independent protein translocase protein TatA (65 aa).

A helical membrane pass occupies residues 9-29 (ILIIVLLVVVVFGIGKLPQVG). Residues 43-65 (SSGEEEKEEVETKEETKTIEKSE) are disordered. Residues 45–54 (GEEEKEEVET) are compositionally biased toward acidic residues. Positions 55–65 (KEETKTIEKSE) are enriched in basic and acidic residues.

The protein belongs to the TatA/E family. In terms of assembly, forms a complex with TatC.

The protein localises to the cell membrane. In terms of biological role, part of the twin-arginine translocation (Tat) system that transports large folded proteins containing a characteristic twin-arginine motif in their signal peptide across membranes. TatA could form the protein-conducting channel of the Tat system. The polypeptide is Sec-independent protein translocase protein TatA (Dehalococcoides mccartyi (strain ATCC BAA-2266 / KCTC 15142 / 195) (Dehalococcoides ethenogenes (strain 195))).